The primary structure comprises 158 residues: 6,7-dimethyl-8-ribityllumazine synthase (158 aa).

5-amino-6-(D-ribitylamino)uracil is bound by residues F23, 61–63, and 85–87; these read SFE and AVI. (2S)-2-hydroxy-3-oxobutyl phosphate is bound at residue 90–91; that stretch reads ET. H93 (proton donor) is an active-site residue. Position 118 (F118) interacts with 5-amino-6-(D-ribitylamino)uracil. Position 132 (R132) interacts with (2S)-2-hydroxy-3-oxobutyl phosphate.

The protein belongs to the DMRL synthase family.

The enzyme catalyses (2S)-2-hydroxy-3-oxobutyl phosphate + 5-amino-6-(D-ribitylamino)uracil = 6,7-dimethyl-8-(1-D-ribityl)lumazine + phosphate + 2 H2O + H(+). It participates in cofactor biosynthesis; riboflavin biosynthesis; riboflavin from 2-hydroxy-3-oxobutyl phosphate and 5-amino-6-(D-ribitylamino)uracil: step 1/2. Its function is as follows. Catalyzes the formation of 6,7-dimethyl-8-ribityllumazine by condensation of 5-amino-6-(D-ribitylamino)uracil with 3,4-dihydroxy-2-butanone 4-phosphate. This is the penultimate step in the biosynthesis of riboflavin. In Prochlorococcus marinus subsp. pastoris (strain CCMP1986 / NIES-2087 / MED4), this protein is 6,7-dimethyl-8-ribityllumazine synthase.